We begin with the raw amino-acid sequence, 154 residues long: 6,7-dimethyl-8-ribityllumazine synthase (154 aa).

Residues phenylalanine 22, 56–58 (AFE), and 80–82 (AVI) contribute to the 5-amino-6-(D-ribitylamino)uracil site. 85 to 86 (AT) is a binding site for (2S)-2-hydroxy-3-oxobutyl phosphate. The active-site Proton donor is histidine 88. Position 113 (phenylalanine 113) interacts with 5-amino-6-(D-ribitylamino)uracil. Arginine 127 lines the (2S)-2-hydroxy-3-oxobutyl phosphate pocket.

The protein belongs to the DMRL synthase family. Forms an icosahedral capsid composed of 60 subunits, arranged as a dodecamer of pentamers.

The enzyme catalyses (2S)-2-hydroxy-3-oxobutyl phosphate + 5-amino-6-(D-ribitylamino)uracil = 6,7-dimethyl-8-(1-D-ribityl)lumazine + phosphate + 2 H2O + H(+). The protein operates within cofactor biosynthesis; riboflavin biosynthesis; riboflavin from 2-hydroxy-3-oxobutyl phosphate and 5-amino-6-(D-ribitylamino)uracil: step 1/2. Catalyzes the formation of 6,7-dimethyl-8-ribityllumazine by condensation of 5-amino-6-(D-ribitylamino)uracil with 3,4-dihydroxy-2-butanone 4-phosphate. This is the penultimate step in the biosynthesis of riboflavin. The protein is 6,7-dimethyl-8-ribityllumazine synthase of Geobacillus thermodenitrificans (strain NG80-2).